Reading from the N-terminus, the 139-residue chain is Putative pre-16S rRNA nuclease (139 aa).

It belongs to the YqgF nuclease family.

It is found in the cytoplasm. Its function is as follows. Could be a nuclease involved in processing of the 5'-end of pre-16S rRNA. This is Putative pre-16S rRNA nuclease from Streptococcus pyogenes serotype M49 (strain NZ131).